Here is a 113-residue protein sequence, read N- to C-terminus: Dynein light chain Tctex-type 1 (113 aa).

The residue at position 1 (methionine 1) is an N-acetylmethionine. Positions 41–113 (QWTTNVVEQT…CIVSAFGLSI (73 aa)) are interaction with GNB1.

It belongs to the dynein light chain Tctex-type family. As to quaternary structure, homodimer. The cytoplasmic dynein 1 complex consists of two catalytic heavy chains (HCs) and a number of non-catalytic subunits presented by intermediate chains (ICs), light intermediate chains (LICs) and light chains (LCs); the composition seems to vary in respect to the IC, LIC and LC composition. The heavy chain homodimer serves as a scaffold for the probable homodimeric assembly of the non-catalytic subunits. The ICs and LICs bind directly to the HC dimer and the LCs assemble on the IC dimer. DYNLT1 and DYNLT3 compete for association with dynein IC (DYNC1I1 or DYNC1I2). Self-associates. Interacts with RHO. Interacts with DYNC1I1 and DYNC1I2. Interacts with DOC2A, DOC2B and SCN10A. Interacts with PVR. Interacts with SVIL isoform 2. Interacts with GNB1; the interaction occurs in presence of guanine nucleotide-binding protein G(T) subunit gamma; the interaction diminishes the association of DYNLT1 with dynein IC (DYNC1I1 or DYNC1I2). Interacts with GNB2, GNB3 and GNB5; the interactions occur in presence of guanine nucleotide-binding protein G(T) subunit gamma. Interacts with ACVR2B and ARHGEF2. Interacts with DNAI4. Interacts with CFAP61. Phosphorylated by BMPR2. The phosphorylation status is proposed to regulate the association with the cytoplasmic dynein complex and may have role in cytoplasmic dynein cargo release.

It is found in the golgi apparatus. The protein localises to the cytoplasm. Its subcellular location is the cytoskeleton. It localises to the spindle. Functionally, acts as one of several non-catalytic accessory components of the cytoplasmic dynein 1 complex that are thought to be involved in linking dynein to cargos and to adapter proteins that regulate dynein function. Cytoplasmic dynein 1 acts as a motor for the intracellular retrograde motility of vesicles and organelles along microtubules. Binds to transport cargos and is involved in apical cargo transport such as rhodopsin-bearing vesicles in polarized epithelia. May also be a accessory component of axonemal dynein. Plays a role in neuronal morphogenesis; the function is independent of cytoplasmic dynein and seems to be coupled to regulation of the actin cytoskeleton by enhancing Rac1 activity. The function in neurogenesis may be regulated by association with a G-protein beta-gamma dimer. May function as a receptor-independent activator of heterotrimeric G-protein signaling; the activation appears to be independent of a nucleotide exchange. Plays a role in regulating neurogenesis; inhibits the genesis of neurons from precursor cells during cortical development presumably by antagonizing ARHGEF2. Involved in the regulation of mitotic spindle orientation. Unrelated to the role in retrograde microtubule-associated movement may play a role in the dimerization of cytoplasmic proteins/domains such as for ACVR2B. Binds to the cytoplasmic domain of ACVR2B and, in vitro, inhibits ACVR2B signaling. The polypeptide is Dynein light chain Tctex-type 1 (DYNLT1) (Bos taurus (Bovine)).